The primary structure comprises 457 residues: Multidrug resistance protein MdtK (457 aa).

Helical transmembrane passes span 11–31 (LLAL…MGFV), 53–73 (IWLP…PVIA), 93–113 (WLAG…GYII), 127–147 (AVGY…FQVA), 160–180 (GMVM…IFIY), 189–209 (GGVG…LAMV), 243–263 (LPIA…ALLV), 276–296 (IALN…AAVT), 314–334 (AART…IFTV), 350–370 (VVTL…SDSI), 387–407 (IFYI…YILA), and 418–438 (PAGF…MMML).

The protein belongs to the multi antimicrobial extrusion (MATE) (TC 2.A.66.1) family. MdtK subfamily.

Its subcellular location is the cell inner membrane. In terms of biological role, multidrug efflux pump that functions probably as a Na(+)/drug antiporter. This Escherichia coli O17:K52:H18 (strain UMN026 / ExPEC) protein is Multidrug resistance protein MdtK.